Consider the following 762-residue polypeptide: Cellulose synthase-like protein H2 (762 aa).

Residues M1–R15 are compositionally biased toward low complexity. Residues M1–R39 are disordered. The next 2 helical transmembrane spans lie at A47–L67 and G81–V101. Active-site residues include D180 and D470. The next 6 helical transmembrane spans lie at L541–L561, F582–A602, I619–L639, L673–G693, A708–V728, and G739–C759.

It belongs to the glycosyltransferase 2 family. Plant cellulose synthase-like H subfamily.

The protein resides in the golgi apparatus membrane. Its function is as follows. Thought to be a Golgi-localized beta-glycan synthase that polymerize the backbones of noncellulosic polysaccharides (hemicelluloses) of plant cell wall. The polypeptide is Cellulose synthase-like protein H2 (CSLH2) (Oryza sativa subsp. japonica (Rice)).